A 495-amino-acid polypeptide reads, in one-letter code: Ectonucleoside triphosphate diphosphohydrolase 2 (495 aa).

Over 2–4 the chain is Cytoplasmic; the sequence is ARR. The chain crosses the membrane as a helical span at residues 5 to 25; it reads AAAVLLLLALGCLLGILLLCL. Residues 26-465 lie on the Extracellular side of the membrane; it reads GSGDARGPPS…SHRSMLYNYW (440 aa). Residue Asn62 is glycosylated (N-linked (GlcNAc...) asparagine). Cys73 and Cys97 form a disulfide bridge. Glu162 functions as the Proton acceptor in the catalytic mechanism. 201–205 contributes to the ATP binding site; it reads GASTQ. 4 disulfide bridges follow: Cys239–Cys286, Cys267–Cys311, Cys324–Cys329, and Cys378–Cys400. Residue Asn297 is glycosylated (N-linked (GlcNAc...) asparagine). N-linked (GlcNAc...) asparagine glycans are attached at residues Asn418 and Asn444. The helical transmembrane segment at 466 to 486 threads the bilayer; that stretch reads VILILLFVITTLTALLTAVYL. Over 487–495 the chain is Cytoplasmic; the sequence is LRRSKSSTI.

This sequence belongs to the GDA1/CD39 NTPase family. The cofactor is Ca(2+). It depends on Mg(2+) as a cofactor.

The protein resides in the membrane. In terms of biological role, in the nervous system, could hydrolyze ATP and other nucleotides to regulate purinergic neurotransmission. Hydrolyzes ADP only to a marginal extent. This chain is Ectonucleoside triphosphate diphosphohydrolase 2 (ENTPD2), found in Gallus gallus (Chicken).